The primary structure comprises 1820 residues: Histone-lysine N-methyltransferase, H3 lysine-9 specific (1820 aa).

Disordered regions lie at residues 1-54 (MPGA…TSMR), 74-251 (NLLP…TPVT), 284-618 (SLSD…APTK), 634-681 (SSER…KKAV), 804-836 (NVDDQDSAQPQNQTPLPSAISVSSKKNHGSLSK), 850-893 (SSTL…VNSW), 911-944 (HAKKKWKERERGKEREKEKVREKEKAEEENEQLR), 966-996 (DVESRTRSIPRADGETRKRPPSPGISVSTDA), 1063-1126 (PLSV…NGAV), 1183-1270 (RYAV…DRTA), 1296-1335 (KASAVSPVPSANRPSPAPSAKADLLPQKRKRRLKKITSQQ), and 1385-1407 (RSEPRTKREPIEEDNNEYFTDSD). The span at 11–31 (VDNPLVLDSSDSDDNLSGLPL) shows a compositional bias: low complexity. Residues 109–129 (ADSSSPPENQNVISFLGNHSQ) show a composition bias toward polar residues. Low complexity predominate over residues 152–169 (GGENIAGQNNEANAAQAA). Polar residues-rich tracts occupy residues 174–204 (GTPSLTLSSNRPQSVSGAQLVVASSSRSAIN) and 212–222 (SIPQQSPSSRA). Composition is skewed to low complexity over residues 226 to 236 (RSASIASSRSR), 284 to 311 (SLSDPTILSPPSATSAPPNSPIPSTSTT), and 339 to 352 (TPATTSPAGPGPSA). The span at 361 to 370 (KSSDQKESPR) shows a compositional bias: basic and acidic residues. The span at 374 to 385 (SKQPSSPSSTHG) shows a compositional bias: polar residues. Low complexity predominate over residues 400–424 (SATSGKSSAASSRSKSRAPLSSRAA). A compositionally biased stretch (polar residues) spans 433 to 442 (SKTTSVSSTH). Residues 443 to 459 (PPSRASPSSLPSQSQRQ) show a composition bias toward low complexity. Polar residues predominate over residues 479 to 510 (TLSSGTGQSTPSKFSLPTSDVASNQKNKSTGL). Low complexity-rich tracts occupy residues 514 to 531 (PKKPSSTPTSSIPQRTST), 551 to 563 (QSSSEASRSIQTS), and 594 to 618 (TKATTLFHTTSSPPSPSQSTSAPTK). 2 stretches are compositionally biased toward polar residues: residues 643–662 (GKSQTSDSVVAPAASQTAAS) and 810–827 (SAQPQNQTPLPSAISVSS). Over residues 850-861 (SSTLGDSVSGLG) the composition is skewed to low complexity. Positions 869–893 (TQSMPQSPLPTTNTNNSSGIEVNSW) are enriched in polar residues. Basic and acidic residues-rich tracts occupy residues 917-944 (KERERGKEREKEKVREKEKAEEENEQLR) and 966-983 (DVESRTRSIPRADGETRK). A compositionally biased stretch (low complexity) spans 1076 to 1089 (SSSSTSTPSLLSRS). Residues 1296 to 1320 (KASAVSPVPSANRPSPAPSAKADLL) show a composition bias toward low complexity. A Pre-SET domain is found at 1516-1585 (LGCDCDGPCD…ECMNRVIQRG (70 aa)). Zn(2+) contacts are provided by C1518, C1520, C1524, C1531, C1533, C1567, C1571, C1573, and C1577. The 161-residue stretch at 1590–1750 (TGIEIFKTKE…KHEELCISYK (161 aa)) folds into the SET domain. S-adenosyl-L-methionine is bound by residues 1600-1602 (KGW), Y1643, R1704, and 1707-1708 (NH). A Zn(2+)-binding site is contributed by C1710. The disordered stretch occupies residues 1756 to 1794 (DDIPSPEPVKKKKGGKGKKQMSKTSASAHPPEMTALNSD). Basic residues predominate over residues 1765–1776 (KKKKGGKGKKQM). Positions 1800 to 1816 (VKDICRCGAKNCDGRMF) constitute a Post-SET domain. Zn(2+)-binding residues include C1804, C1806, and C1811.

Belongs to the class V-like SAM-binding methyltransferase superfamily. Histone-lysine methyltransferase family. Suvar3-9 subfamily.

The protein resides in the nucleus. It is found in the chromosome. The enzyme catalyses N(6)-methyl-L-lysyl(9)-[histone H3] + S-adenosyl-L-methionine = N(6),N(6)-dimethyl-L-lysyl(9)-[histone H3] + S-adenosyl-L-homocysteine + H(+). It carries out the reaction L-lysyl(9)-[histone H3] + S-adenosyl-L-methionine = N(6)-methyl-L-lysyl(9)-[histone H3] + S-adenosyl-L-homocysteine + H(+). Histone methyltransferase that specifically dimethylates histone H3 to form H3K9me2. H3K9me2 represents a specific tag for epigenetic transcriptional repression by recruiting HP1 proteins to methylated histones. Mainly functions in heterochromatin regions, thereby playing a central role in the establishment of constitutive heterochromatin at centromeric regions. The polypeptide is Histone-lysine N-methyltransferase, H3 lysine-9 specific (Cryptococcus neoformans var. grubii serotype A (strain H99 / ATCC 208821 / CBS 10515 / FGSC 9487) (Filobasidiella neoformans var. grubii)).